A 291-amino-acid chain; its full sequence is Potassium-transporting ATPase subunit beta (291 aa).

Residues 1–36 (MAALQEKKSCSQRMEEFRHYCWNPDTGQMLGRTLSR) are Cytoplasmic-facing. The helical; Signal-anchor for type II membrane protein transmembrane segment at 37 to 57 (WVWISLYYVAFYVVMTGLFAL) threads the bilayer. Topologically, residues 58-291 (CIYVLMQTID…KVEFKLKIQK (234 aa)) are extracellular. N-linked (GlcNAc...) asparagine glycans are attached at residues N99, N103, N130, N146, and N161. C131 and C152 are disulfide-bonded. A disulfide bridge links C162 with C178. N-linked (GlcNAc...) asparagine glycosylation is found at N193 and N222. The tract at residues 194–291 (STPPRVDCTF…KVEFKLKIQK (98 aa)) is immunoglobulin-like. A disulfide bridge connects residues C201 and C263.

This sequence belongs to the X(+)/potassium ATPases subunit beta family. As to quaternary structure, the ATPase pump is composed of two subunits: alpha (catalytic) and beta (regulatory). Interacts with alpha subunit ATP12A; this interaction is required for the formation of a functionally active pump and targeting at the plasma membrane. Interacts (via N-terminus) with alpha subunit ATP4A (via the P-domain). N-glycosylation is necessary for assembly and functional expression of the pump at the plasma membrane.

Its subcellular location is the apical cell membrane. It is found in the cell membrane. In terms of biological role, the beta subunit of the gastric H(+)/K(+) ATPase pump which transports H(+) ions in exchange for K(+) ions across the apical membrane of parietal cells. Plays a structural and regulatory role in the assembly and membrane targeting of a functionally active pump. Within a transport cycle, the transfer of a H(+) ion across the membrane is coupled to ATP hydrolysis and is associated with a transient phosphorylation of the alpha subunit that shifts the pump conformation from inward-facing (E1) to outward-facing state (E2). Interacts with the phosphorylation domain of the alpha subunit and functions as a ratchet, stabilizing the lumenal-open E2 conformation and preventing the reverse reaction of the transport cycle. In Oryctolagus cuniculus (Rabbit), this protein is Potassium-transporting ATPase subunit beta (ATP4B).